A 394-amino-acid polypeptide reads, in one-letter code: Enoyl-[acyl-carrier-protein] reductase [NADH] (394 aa).

NAD(+) is bound by residues 48–53 (GASTGY), 74–75 (YE), 111–112 (DA), and 139–140 (LA). A substrate-binding site is contributed by tyrosine 225. The Proton donor role is filled by tyrosine 235. Residues lysine 244 and 273 to 275 (LVT) contribute to the NAD(+) site.

It belongs to the TER reductase family. Monomer.

It carries out the reaction a 2,3-saturated acyl-[ACP] + NAD(+) = a (2E)-enoyl-[ACP] + NADH + H(+). Its pathway is lipid metabolism; fatty acid biosynthesis. In terms of biological role, involved in the final reduction of the elongation cycle of fatty acid synthesis (FAS II). Catalyzes the reduction of a carbon-carbon double bond in an enoyl moiety that is covalently linked to an acyl carrier protein (ACP). This chain is Enoyl-[acyl-carrier-protein] reductase [NADH], found in Opitutus terrae (strain DSM 11246 / JCM 15787 / PB90-1).